The chain runs to 390 residues: Centrosomal protein of 44 kDa (390 aa).

Positions 11 to 195 (RNLEQVLRLL…ISEDTLSPIT (185 aa)) are binds with microtubules and centrioles. A coiled-coil region spans residues 233 to 269 (EITALQTMLAECQENLKKLTSIEKRLDCLEQKMKGKV). The disordered stretch occupies residues 322–348 (RKSEVERPASIPLSSGYSTASSDSTPR). Residues Ser-331 and Ser-345 each carry the phosphoserine modification. Over residues 335–345 (SSGYSTASSDS) the composition is skewed to low complexity. Thr-346 is modified (phosphothreonine). The stretch at 361–385 (SEETTIQKMERMKKMFEETAELLKC) forms a coiled coil.

As to quaternary structure, interacts with CROCC. Interacts with POC1B; the interaction is direct and recruits POC1B to centriolar microtubules. Binds to centriolar microtubules.

The protein localises to the cytoplasm. It is found in the cytoskeleton. The protein resides in the microtubule organizing center. Its subcellular location is the centrosome. It localises to the centriole. The protein localises to the spindle pole. It is found in the midbody. Functionally, centriole-enriched microtubule-binding protein involved in centriole biogenesis. In collaboration with CEP295 and POC1B, is required for the centriole-to-centrosome conversion by ensuring the formation of bona fide centriole wall. Functions as a linker component that maintains centrosome cohesion. Associates with CROCC and regulates its stability and localization to the centrosome. In Homo sapiens (Human), this protein is Centrosomal protein of 44 kDa (CEP44).